The sequence spans 492 residues: Catalase isozyme 1 (492 aa).

Catalysis depends on residues histidine 65 and asparagine 138. Tyrosine 348 is a heme binding site.

The protein belongs to the catalase family. Homotetramer. Heme serves as cofactor. High expression in seeds and early seedlings.

Its subcellular location is the glyoxysome. The enzyme catalyses 2 H2O2 = O2 + 2 H2O. Occurs in almost all aerobically respiring organisms and serves to protect cells from the toxic effects of hydrogen peroxide. The protein is Catalase isozyme 1 (CAT1) of Cucurbita pepo (Vegetable marrow).